Reading from the N-terminus, the 370-residue chain is Pantothenate kinase 3 (370 aa).

Glutamate 138 (proton acceptor) is an active-site residue. Residues serine 192, serine 195, and arginine 207 each contribute to the acetyl-CoA site.

It belongs to the type II pantothenate kinase family. In terms of assembly, homodimer. In terms of tissue distribution, highly expressed in the liver.

The protein localises to the cytoplasm. It catalyses the reaction (R)-pantothenate + ATP = (R)-4'-phosphopantothenate + ADP + H(+). The protein operates within cofactor biosynthesis; coenzyme A biosynthesis; CoA from (R)-pantothenate: step 1/5. Its activity is regulated as follows. Subject to allosteric regulation, exists in two distinct conformational states, a catalytically incompetent (or open) conformation stabilized by the binding of acetyl(acyl)-CoA, and a catalytically competent (or closed) conformation stabilized by ATP-binding. Inhibited by acetyl-CoA and its thioesters which act as allosteric inhibitors and compete with the ATP-binding site. Inhibited by sulfonylureas and thiazolidinediones. Activated by oleoylethanolamide, palmitoyl-carnitine and oleoyl-carnitine. Its function is as follows. Catalyzes the phosphorylation of pantothenate to generate 4'-phosphopantothenate in the first and rate-determining step of coenzyme A (CoA) synthesis. The protein is Pantothenate kinase 3 (PANK3) of Homo sapiens (Human).